A 279-amino-acid chain; its full sequence is Replication protein A 32 kDa subunit A (279 aa).

Residues 1-39 (MMSFSQPDAFSPSQFTSSQNAAADSTTPSKSRGASSTMP) form a disordered region. Residues 71 to 145 (VRLVGLVSGK…RATAFAIRPV (75 aa)) constitute a DNA-binding region (OB). The disordered stretch occupies residues 181–210 (GSSSSNGFSEMTTPTSVKSNPAPVLSVTNG). A compositionally biased stretch (polar residues) spans 190 to 199 (EMTTPTSVKS).

It belongs to the replication factor A protein 2 family. Heterotrimer of RPA1, RPA2 and RPA3 (canonical replication protein A complex). Interacts with RPA1A, RPA1B and RPA3. In terms of processing, phosphorylated in a cell-cycle-dependent manner (from the S phase until mitosis). In response to DNA damage, recruited to DNA-repair nuclear foci, as a hypophosphorylated form. As to expression, expressed in root tips, roots, shoot apical meristem (SAM), young leaves, flag leaves and ears, and at lower levels in mature leaves.

It is found in the nucleus. Functionally, component of the replication protein A complex (RPA) required for DNA recombination, repair and replication. The activity of RPA is mediated by single-stranded DNA binding and protein interactions. This Oryza sativa subsp. japonica (Rice) protein is Replication protein A 32 kDa subunit A (RPA2A).